We begin with the raw amino-acid sequence, 330 residues long: Glycerol-3-phosphate dehydrogenase [NAD(P)+] (330 aa).

Positions 11, 31, 32, and 105 each coordinate NADPH. Lys-105 and Gly-133 together coordinate sn-glycerol 3-phosphate. Ala-137 contributes to the NADPH binding site. 5 residues coordinate sn-glycerol 3-phosphate: Lys-188, Asp-241, Ser-251, Arg-252, and Asn-253. Catalysis depends on Lys-188, which acts as the Proton acceptor. An NADPH-binding site is contributed by Arg-252. Positions 277 and 279 each coordinate NADPH.

The protein belongs to the NAD-dependent glycerol-3-phosphate dehydrogenase family.

The protein localises to the cytoplasm. It catalyses the reaction sn-glycerol 3-phosphate + NAD(+) = dihydroxyacetone phosphate + NADH + H(+). The enzyme catalyses sn-glycerol 3-phosphate + NADP(+) = dihydroxyacetone phosphate + NADPH + H(+). The protein operates within membrane lipid metabolism; glycerophospholipid metabolism. In terms of biological role, catalyzes the reduction of the glycolytic intermediate dihydroxyacetone phosphate (DHAP) to sn-glycerol 3-phosphate (G3P), the key precursor for phospholipid synthesis. This is Glycerol-3-phosphate dehydrogenase [NAD(P)+] from Orientia tsutsugamushi (strain Boryong) (Rickettsia tsutsugamushi).